An 88-amino-acid polypeptide reads, in one-letter code: Small ribosomal subunit protein uS15 (88 aa).

This sequence belongs to the universal ribosomal protein uS15 family. As to quaternary structure, part of the 30S ribosomal subunit. Forms a bridge to the 50S subunit in the 70S ribosome, contacting the 23S rRNA.

In terms of biological role, one of the primary rRNA binding proteins, it binds directly to 16S rRNA where it helps nucleate assembly of the platform of the 30S subunit by binding and bridging several RNA helices of the 16S rRNA. Its function is as follows. Forms an intersubunit bridge (bridge B4) with the 23S rRNA of the 50S subunit in the ribosome. In Acidobacterium capsulatum (strain ATCC 51196 / DSM 11244 / BCRC 80197 / JCM 7670 / NBRC 15755 / NCIMB 13165 / 161), this protein is Small ribosomal subunit protein uS15.